The chain runs to 127 residues: V-type proton ATPase subunit F (127 aa).

It belongs to the V-ATPase F subunit family. In terms of assembly, V-ATPase is a heteromultimeric enzyme made up of two complexes: the ATP-hydrolytic V1 complex and the proton translocation V0 complex. The V1 complex consists of three catalytic AB heterodimers that form a heterohexamer, three peripheral stalks each consisting of EG heterodimers, one central rotor including subunits D and F, and the regulatory subunits C and H. The proton translocation complex V0 consists of the proton transport subunit a, a ring of proteolipid subunits c9c'', rotary subunit d, subunits e and f, and the accessory subunits VhaAC45 and ATP6AP2.

Its function is as follows. Subunit of the V1 complex of vacuolar(H+)-ATPase (V-ATPase), a multisubunit enzyme composed of a peripheral complex (V1) that hydrolyzes ATP and a membrane integral complex (V0) that translocates protons. V-ATPase is responsible for acidifying and maintaining the pH of intracellular compartments and in some cell types, is targeted to the plasma membrane, where it is responsible for acidifying the extracellular environment. The chain is V-type proton ATPase subunit F from Aedes aegypti (Yellowfever mosquito).